A 215-amino-acid polypeptide reads, in one-letter code: Eukaryotic translation initiation factor 4E-1A (215 aa).

Low complexity predominate over residues 1 to 14; it reads MATAEPETSTNPSN. A disordered region spans residues 1-23; it reads MATAEPETSTNPSNSEEKNEENE. MRNA-binding positions include 54–55, 100–101, 155–160, and 203–205; these read WQ, WE, RTKGDK, and TKS.

Belongs to the eukaryotic initiation factor 4E family. In terms of assembly, interacts with eif4ebp3l. Expressed in all tissues examined, including gill, fin, heart, intestine, muscle, ovary and testis.

The protein resides in the cytoplasm. Its subcellular location is the nucleus. Its function is as follows. Recognizes and binds the 7-methylguanosine (m7G)-containing mRNA cap during an early step in the initiation of protein synthesis and facilitates ribosome binding by inducing the unwinding of the mRNAs secondary structures. Also promotes export of a subset of mRNAs from the nucleus to the cytoplasm. This Danio rerio (Zebrafish) protein is Eukaryotic translation initiation factor 4E-1A.